Reading from the N-terminus, the 202-residue chain is NADH-quinone oxidoreductase subunit C (202 aa).

This sequence belongs to the complex I 30 kDa subunit family. As to quaternary structure, NDH-1 is composed of 14 different subunits. Subunits NuoB, C, D, E, F, and G constitute the peripheral sector of the complex.

Its subcellular location is the cell inner membrane. The enzyme catalyses a quinone + NADH + 5 H(+)(in) = a quinol + NAD(+) + 4 H(+)(out). In terms of biological role, NDH-1 shuttles electrons from NADH, via FMN and iron-sulfur (Fe-S) centers, to quinones in the respiratory chain. The immediate electron acceptor for the enzyme in this species is believed to be ubiquinone. Couples the redox reaction to proton translocation (for every two electrons transferred, four hydrogen ions are translocated across the cytoplasmic membrane), and thus conserves the redox energy in a proton gradient. In Hyphomonas neptunium (strain ATCC 15444), this protein is NADH-quinone oxidoreductase subunit C.